The primary structure comprises 69 residues: Beta-defensin 1 (69 aa).

The first 21 residues, 1–21, serve as a signal peptide directing secretion; that stretch reads MKTHYFLLVMICFLFSQMEPG. Residues 22–32 constitute a propeptide that is removed on maturation; the sequence is VGILTSLGRRT. 3 disulfide bridges follow: Cys37-Cys66, Cys44-Cys59, and Cys49-Cys67.

Belongs to the beta-defensin family. Monomer. Homodimer. As to expression, detected in kidney.

The protein resides in the secreted. The protein localises to the membrane. In terms of biological role, has bactericidal activity. May act as a ligand for C-C chemokine receptor CCR6. Positively regulates the sperm motility and bactericidal activity in a CCR6-dependent manner. Binds to CCR6 and triggers Ca2+ mobilization in the sperm which is important for its motility. The chain is Beta-defensin 1 (Defb1) from Mus musculus (Mouse).